A 103-amino-acid polypeptide reads, in one-letter code: c-Myc-binding protein (103 aa).

The protein belongs to the AMY1 family. In terms of assembly, binds via its C-terminal region to the N-terminal region of MYC. Associates with AKAP1/S-AKAP84. Interacts with MYCBPAP. Interacts with CFAP91.

It is found in the cytoplasm. The protein localises to the nucleus. Functionally, may control the transcriptional activity of MYC. Stimulates the activation of E box-dependent transcription by MYC. The chain is c-Myc-binding protein (MYCBP) from Bos taurus (Bovine).